Here is a 129-residue protein sequence, read N- to C-terminus: Large ribosomal subunit protein uL14m (129 aa).

The protein belongs to the universal ribosomal protein uL14 family. Component of the mitochondrial ribosome large subunit (39S) which comprises a 16S rRNA and about 50 distinct proteins.

It is found in the mitochondrion. This Dictyostelium discoideum (Social amoeba) protein is Large ribosomal subunit protein uL14m (mrpl14).